A 147-amino-acid chain; its full sequence is D-aminoacyl-tRNA deacylase (147 aa).

A Gly-cisPro motif, important for rejection of L-amino acids motif is present at residues 137-138 (GP).

The protein belongs to the DTD family. As to quaternary structure, homodimer.

The protein resides in the cytoplasm. The catalysed reaction is glycyl-tRNA(Ala) + H2O = tRNA(Ala) + glycine + H(+). It carries out the reaction a D-aminoacyl-tRNA + H2O = a tRNA + a D-alpha-amino acid + H(+). Its function is as follows. An aminoacyl-tRNA editing enzyme that deacylates mischarged D-aminoacyl-tRNAs. Also deacylates mischarged glycyl-tRNA(Ala), protecting cells against glycine mischarging by AlaRS. Acts via tRNA-based rather than protein-based catalysis; rejects L-amino acids rather than detecting D-amino acids in the active site. By recycling D-aminoacyl-tRNA to D-amino acids and free tRNA molecules, this enzyme counteracts the toxicity associated with the formation of D-aminoacyl-tRNA entities in vivo and helps enforce protein L-homochirality. This chain is D-aminoacyl-tRNA deacylase, found in Bacillus pumilus (strain SAFR-032).